Consider the following 632-residue polypeptide: Chaperone protein HtpG (632 aa).

An a; substrate-binding region spans residues 1–339 (MTQQTMSFQA…SSDLPLNVSR (339 aa)). Positions 340–559 (EILQESRDVK…DNDMSGYLQR (220 aa)) are b. The c stretch occupies residues 560–632 (MLKAAGQSAP…TNALLLSRAA (73 aa)).

It belongs to the heat shock protein 90 family. In terms of assembly, homodimer.

Its subcellular location is the cytoplasm. Its function is as follows. Molecular chaperone. Has ATPase activity. This chain is Chaperone protein HtpG, found in Burkholderia pseudomallei (strain 668).